A 141-amino-acid polypeptide reads, in one-letter code: Protein C19orf12 homolog (141 aa).

A helical membrane pass occupies residues 37 to 57 (AVAFVGGLVGGPPGLAVGGAV).

Belongs to the C19orf12 family.

The protein resides in the mitochondrion. It is found in the mitochondrion membrane. It localises to the endoplasmic reticulum. The protein localises to the cytoplasm. Its subcellular location is the cytosol. This chain is Protein C19orf12 homolog, found in Bos taurus (Bovine).